We begin with the raw amino-acid sequence, 509 residues long: MVATLANLNFPYLILSACLSAILLSRFLPFTRRDRRPTAKGCLPEPRVFQWDVFFGLDIPISQGRALQQNRYLEWLRDLHASMPRTKTFSVNFGGYRWIYSIEPEILKAVYATNFQDFGVEPIRQHPPGFKPFAEKGVSTSDGEDWAFSRSLIKPFFERSVYVSTDRVKPFADKFLTFIPEDGETFDIQPLLQRWFLDMTSEFIFGKSQDSMTHPERAEVIWAMADVLRGTRLRAQTYKILWAFNWDWWFKAIEKVHGFLNPYIRSTLAELAERQQRVKEGLPVGEERTDLLWSMATMLPEEEALRSQVCIIFVPNNDTTSIFIAHCLYFLARHPDAWRKLREEVTAVGDAPITFELLRNMKYLNGIMNETHRLIPNNVTQIRSALSDVVLPLGGGPDGKAPLDVRKGDIVSVTKTVMYRDPDRWGADADEYRPERWDGMRGGWHFLPYGGGPRRCPAQMMVQNESGYMLCRLARRYARIEARDKEPYRARMRIGPSSLHGVKIAFYKE.

The chain crosses the membrane as a helical span at residues 5-27 (LANLNFPYLILSACLSAILLSRF). Asn317, Asn369, and Asn378 each carry an N-linked (GlcNAc...) asparagine glycan. Cys456 is a heme binding site. The N-linked (GlcNAc...) asparagine glycan is linked to Asn464.

Belongs to the cytochrome P450 family. Heme serves as cofactor.

Its subcellular location is the membrane. Its pathway is secondary metabolite biosynthesis. Cytochrome P450 monooxygenase; part of the gene cluster that mediates the biosynthesis of fumosorinone, a 2-pyridone alkaloid that acts as an inhibitor of protein tyrosine phosphatase 1B which is implicated asa negative regulator of insulin receptor signaling and a potential drug target for the treatment of type II diabetes and other associated metabolic syndromes. The polyketide-amino acid backbone of fumosorinone is first assembled by the PKS-NRPS hybrid fumoS. The PKS modules condense one acetyl-CoA starter unit with 7 malonyl-CoA units, programmed C-methylations occurring after the first 3 and the sixth extensions, and cycles of full reduction occurring after the first 2 extensions. Because fumoS lacks a designated enoyl reductase (ER) domain, the required activity is provided the enoyl reductase fumoC. Upon formation of the polyketide backbone on the thiotemplate, the polyketide is transferred to the NRPS module and linked to tyrosine to produce the acyltetramic acid intermediate called prefumosorinone A. The cytochrome P450 monooxygenase fumoA then probably catalyzes an unprecedented oxidative ring expansion of prefumosorinone A to form prefumosorinone B which contains the 2-pyridone core of fumosorinone. The cytochrome P450 monooxygenase fumoB might hydroxylate the nitrogen of prefumosorinone B, but not the acyltetramic acid prefumosorinone A, to form fumosorinone. The polypeptide is Cytochrome P450 monooxygenase fumoA (Cordyceps fumosorosea (strain ARSEF 2679) (Isaria fumosorosea)).